A 413-amino-acid chain; its full sequence is O-methyltransferase kntB (413 aa).

S-adenosyl-L-methionine-binding positions include 255 to 256 (GG), aspartate 280, 302 to 303 (NF), and arginine 319. Histidine 322 serves as the catalytic Proton acceptor.

This sequence belongs to the class I-like SAM-binding methyltransferase superfamily. Cation-independent O-methyltransferase family. The cofactor is S-adenosyl-L-methionine.

It participates in secondary metabolite biosynthesis. Non-reducing polyketide synthase; part of the gene cluster that mediates the biosynthesis of the bicoumarin kotanin. The non-reducing polyketide synthase ktnS first catalyzes the formation of the pentaketidic 4,7-dihydroxy-5-methylcoumarin from acetyl coenzyme A and 4 malonyl coenzyme A molecules. Further O-methylation by ktnB leads to the formation of 7-demethylsiderin. Then, an oxidative phenol coupling catalyzed by the cytochrome P450 monooxygenase ktnC forms the 8,8'-dimer P-orlandin via dimerization the monomeric precursor, 7-demethylsiderin. P-orlandin is subsequently O-methylated in a stepwise fashion to demethylkotanin and kotanin. This Aspergillus niger (strain ATCC MYA-4892 / CBS 513.88 / FGSC A1513) protein is O-methyltransferase kntB.